Consider the following 243-residue polypeptide: MTDQEHSASEENADSVEKHKYMRKIRSFVKREGRMTNRQQTAIDTLWDTMGIDFEEKLIDFNALFGRQAPIVLEIGFGMGKSLIEMAKNAPEKNFIGIEVHGPGVGACLADAGEAGVTNLRVINHDAVEVLDKMIPDNSLAVFQLYFPDPWHKARHHKRRIVQPHFIENMRHKLAIGGVIHMATDWENYAEHMLAVLQASPDFKNTSESDYAPRPEWRPLTKFENRGNNLGHGVWDLLFERIS.

Residues Glu74, Glu99, Asp126, and Asp149 each contribute to the S-adenosyl-L-methionine site. The active site involves Asp149. Substrate contacts are provided by residues Lys153, Asp185, and 221-224; that span reads TKFE.

Belongs to the class I-like SAM-binding methyltransferase superfamily. TrmB family.

It carries out the reaction guanosine(46) in tRNA + S-adenosyl-L-methionine = N(7)-methylguanosine(46) in tRNA + S-adenosyl-L-homocysteine. Its pathway is tRNA modification; N(7)-methylguanine-tRNA biosynthesis. Functionally, catalyzes the formation of N(7)-methylguanine at position 46 (m7G46) in tRNA. The polypeptide is tRNA (guanine-N(7)-)-methyltransferase (Psychromonas ingrahamii (strain DSM 17664 / CCUG 51855 / 37)).